The primary structure comprises 53 residues: Small ribosomal subunit protein uS14m (53 aa).

It belongs to the universal ribosomal protein uS14 family.

The protein localises to the mitochondrion. In Bigelowiella natans (Pedinomonas minutissima), this protein is Small ribosomal subunit protein uS14m (RPS14).